The following is an 81-amino-acid chain: Short neurotoxin 2 (81 aa).

The N-terminal stretch at 1 to 21 is a signal peptide; the sequence is MKTLLLTLVVVTIVCLDLGYT. Intrachain disulfides connect cysteine 24/cysteine 43, cysteine 38/cysteine 60, cysteine 62/cysteine 73, and cysteine 74/cysteine 79.

It belongs to the three-finger toxin family. Short-chain subfamily. Type I alpha-neurotoxin sub-subfamily. In terms of tissue distribution, expressed by the venom gland.

The protein localises to the secreted. Its function is as follows. Binds to muscle nicotinic acetylcholine receptor (nAChR) and inhibit acetylcholine from binding to the receptor, thereby impairing neuromuscular transmission. In Hydrophis peronii (Spiny-headed seasnake), this protein is Short neurotoxin 2.